The chain runs to 557 residues: Ras-specific guanine nucleotide-releasing factor RalGPS2 (557 aa).

The region spanning 49–287 (TPEEYAGQIT…YKLSLKIEPG (239 aa)) is the Ras-GEF domain. The segment at 283–314 (KIEPGTSTPRSAASREDLVGPEVGASPQSGRK) is disordered. Phosphoserine is present on residues Ser-293, Ser-296, Ser-308, and Ser-311. Thr-326 bears the Phosphothreonine mark. The PXXP motif lies at 327–330 (PPSP). Ser-329 and Ser-343 each carry phosphoserine. Thr-361 is modified (phosphothreonine). A disordered region spans residues 368–409 (RHLLDDSVMEPHAPSRGQAESSTLSSGISIGSSDGSELSEET). Ser-374 is subject to Phosphoserine. The segment covering 387 to 403 (ESSTLSSGISIGSSDGS) has biased composition (low complexity). One can recognise a PH domain in the interval 431 to 543 (AVTIQGVLRR…WFKHLSAACQ (113 aa)). The interval 433 to 557 (TIQGVLRRKT…QVPTNLMTFE (125 aa)) is required for stimulation of nucleotide exchange by RALA.

In terms of assembly, interacts with the SH3 domains of GRB2 and PLCG1. Interacts with RALA.

Its subcellular location is the cytoplasm. The protein localises to the cell membrane. Its function is as follows. Guanine nucleotide exchange factor for the small GTPase RALA. May be involved in cytoskeletal organization. May also be involved in the stimulation of transcription in a Ras-independent fashion. This is Ras-specific guanine nucleotide-releasing factor RalGPS2 (RALGPS2) from Macaca fascicularis (Crab-eating macaque).